The chain runs to 173 residues: Photosystem I assembly protein Ycf3 (173 aa).

TPR repeat units follow at residues Ala-35–Thr-68, Gly-72–Leu-105, and Gly-120–Asn-153.

It belongs to the Ycf3 family.

The protein resides in the cellular thylakoid membrane. In terms of biological role, essential for the assembly of the photosystem I (PSI) complex. May act as a chaperone-like factor to guide the assembly of the PSI subunits. This Nostoc punctiforme (strain ATCC 29133 / PCC 73102) protein is Photosystem I assembly protein Ycf3.